The primary structure comprises 704 residues: Polyribonucleotide nucleotidyltransferase (704 aa).

Residues Asp-487 and Asp-493 each contribute to the Mg(2+) site. The KH domain maps to 554–613 (PRLLTIKIHPDKIREVIGKGGSTIQAITKETGTQIDIQDDGTIIIASVNAIAAQAAKSRI). The S1 motif domain maps to 623 to 691 (GRIYEGKVAK…KQGRIRLSIK (69 aa)).

Belongs to the polyribonucleotide nucleotidyltransferase family. Component of the RNA degradosome, which is a multiprotein complex involved in RNA processing and mRNA degradation. Mg(2+) serves as cofactor.

It is found in the cytoplasm. It carries out the reaction RNA(n+1) + phosphate = RNA(n) + a ribonucleoside 5'-diphosphate. Involved in mRNA degradation. Catalyzes the phosphorolysis of single-stranded polyribonucleotides processively in the 3'- to 5'-direction. This Xanthomonas oryzae pv. oryzae (strain MAFF 311018) protein is Polyribonucleotide nucleotidyltransferase.